We begin with the raw amino-acid sequence, 108 residues long: Large ribosomal subunit protein P2A (108 aa).

The disordered stretch occupies residues 62–108 (LSSVPSGAPAAAAGGASAAAGGEATEEAAEEEAAEESDDDMSFGLFD). The segment covering 68 to 84 (GAPAAAAGGASAAAGGE) has biased composition (low complexity). The segment covering 85–102 (ATEEAAEEEAAEESDDDM) has biased composition (acidic residues). The residue at position 98 (S98) is a Phosphoserine.

This sequence belongs to the eukaryotic ribosomal protein P1/P2 family.

In terms of biological role, plays an important role in the elongation step of protein synthesis. In Candida albicans (Yeast), this protein is Large ribosomal subunit protein P2A (RPP2A).